A 196-amino-acid chain; its full sequence is Large ribosomal subunit protein uL5 (196 aa).

The protein belongs to the universal ribosomal protein uL5 family. Part of the 50S ribosomal subunit; part of the 5S rRNA/L5/L18/L25 subcomplex. Contacts the 5S rRNA and the P site tRNA. Forms a bridge to the 30S subunit in the 70S ribosome.

Functionally, this is one of the proteins that bind and probably mediate the attachment of the 5S RNA into the large ribosomal subunit, where it forms part of the central protuberance. In the 70S ribosome it contacts protein S13 of the 30S subunit (bridge B1b), connecting the 2 subunits; this bridge is implicated in subunit movement. Contacts the P site tRNA; the 5S rRNA and some of its associated proteins might help stabilize positioning of ribosome-bound tRNAs. The protein is Large ribosomal subunit protein uL5 of Acidothermus cellulolyticus (strain ATCC 43068 / DSM 8971 / 11B).